The following is an 83-amino-acid chain: Toxin To15 (83 aa).

A signal peptide spans methionine 1–glycine 19. An LCN-type CS-alpha/beta domain is found at lysine 21–tyrosine 82. 4 disulfide bridges follow: cysteine 31-cysteine 81, cysteine 35-cysteine 57, cysteine 43-cysteine 62, and cysteine 47-cysteine 64.

It belongs to the long (4 C-C) scorpion toxin superfamily. Sodium channel inhibitor family. Beta subfamily. As to expression, expressed by the venom gland.

Its subcellular location is the secreted. Beta toxins bind voltage-independently at site-4 of sodium channels (Nav) and shift the voltage of activation toward more negative potentials thereby affecting sodium channel activation and promoting spontaneous and repetitive firing. This Tityus obscurus (Amazonian scorpion) protein is Toxin To15.